The following is a 1619-amino-acid chain: MAAVPTIDLTLADSDNEDIFHSFSSSTSVDKIDIRKENGKLRMAGLEVAQSNDDAARQAFHVFKTNISNNETFDTILSKSKTITDSTFNNEKSSNEVKQQQVLKEETMGSSNDEKKTQESSPSAEMIKLFYENDDVPLSDSFKQKEEGKRINQDEQVKENICGISSSYVSKDYDGVEDDFEPNTCQDSNLDFQEEKLNLNNKPSQQQFSDPETKDNSLKSENKDQIKGVTTTSYRDLPIESSAFQDSETQNNSKNTIPNIVNEKRTPALPSNLSSVESSLKNETAKVEGKTTVRLPGLQNNVALLEQEQSELFKHFSEQPVDISDFGRKIKRKHSGDFADNKILKRPILPSKNMDHTTHNSHDSEQKNSSIIILSDEDESGAGINDIESPLKVSEPNTADALRSSVPEVISLLDLPNIDLNNSVIKEASGSNSIPTSETDAQSSSSSVLQGTIMTEQATQSSQHECNSSLDTLKKNHQKLLKDLNSRESELRNALSCCKTNSEILRRKLSRREKEVSDAEKHWQLLLTSMARGGRTISSTQQILVDEAENQLNKLKEKRQLTKSKLDSINLKMYNYNEQWKSFVHSKNINLQKSLAALERSARDSKASATVNKRNECLAEKEKLDQMLKEGTLSFSTYKQLTGEIQQKLNDLKLGDQRTTDINSVLPIVRQPLAKRDLFIKSIDTAKDLLAKNTSRTEMTKRILYRHLDNLVSYKNFFEDGRSLIDINRRHVAHESAQILFTNGVKMPIVFETLQDYGIKFSNPAIVNPDRRAQYFKSIEVARDLISKSTRSEDAKRKITRFLNIIEEFRKDIDTGFPPTPLKREGVGKAVVGLRQQGLKMDRLYENLRRYKIPITSEELLQQSYLFPVNADQRPPSNWNIVENTEDTSSTANDLSMQDEFHISNMHAAEDQEQIRALLENVKQSESIIDGEALTPEDMTVNLLKHQRLGLHWLLQVENSAKKGGLLADDMGLGKTIQAIALMLANRSEESKCKTNLIVAPVSVLRVWKGELETKVKKRAKFTTFIFGGSGNGKVKHWRDLARYDAVLVSYQTLANEFKKHWPKKLDGEQNQLPAVPHIQALNRLKTSNEYYSPFFCNDSTFYRILLDEGQNIKNKNTRASKACCTINGMYRWVLSGTPIQNSMDELYSLIRFLRIPPYHKEQRFKLDIGRFFQRNKQYQYDNEDRKNALRKVRVLLNAIMLRRSKADKIDGKPLLELPPKIVEVDESRLKGEELKFYTALESKNQALAKKLLNNSTRGSYSSVLTLLLRLRQACCHSELVVMGEKKAEGTKVANGKSFEDDWLRLYYKITHMSGEAQAQVITSMNSMTCFWCMEQLEPEAMSVLTGCGHLICDTCIEPFIEESSMLPQAKKTKGGAFAIPCKDCQRLTNEKDIVSHKLYDQVINQGFTEEDLHAEYLSEMEKQKIQQKNVYVPNFESLEPSTKIEQCIQVIQRVFDESATEKIIIFSQFTTFFEILEHFLKNKLNFPYLKYIGSMNAQRRSDVINEFYRDPEKRILLISMKAGNSGLTLTCANHVVIVDPFWNPYVEEQAQDRCYRISQTKKVQVHKLFIKDSVEDRISELQKRKKEMVDSAMDPGKIKEVNSLGRRELGFLFGLNAL.

The SUMO interacting motif; type a 1 signature appears at isoleucine 7–threonine 10. Residues serine 86–valine 102 are compositionally biased toward polar residues. Disordered stretches follow at residues serine 86–serine 123, asparagine 200–serine 279, proline 347–isoleucine 371, and serine 429–glutamine 450. A compositionally biased stretch (basic and acidic residues) spans leucine 103–glutamine 118. A Phosphoserine modification is found at serine 121. Polar residues predominate over residues asparagine 200 to aspartate 210. Residues proline 211–isoleucine 226 show a composition bias toward basic and acidic residues. 2 stretches are compositionally biased toward polar residues: residues serine 242–asparagine 259 and leucine 269–serine 279. A compositionally biased stretch (basic and acidic residues) spans asparagine 353–glutamine 366. The short motif at isoleucine 371–aspartate 378 is the SUMO interacting motif; type b 1 element. The short motif at leucine 470–leucine 473 is the SUMO interacting motif; type a 2 element. An SUMO interacting motif; type b 2 motif is present at residues isoleucine 543 to asparagine 550. The Helicase ATP-binding domain occupies glutamine 956–proline 1157. Aspartate 969–threonine 976 is a binding site for ATP. The RING-type zinc-finger motif lies at cysteine 1330–glutamine 1386. Residues glutamine 1447–glycine 1606 form the Helicase C-terminal domain.

This sequence belongs to the SNF2/RAD54 helicase family. In terms of assembly, interacts with CDC3, CDC11, EBP2, SIR4, UBC4 and SUMO/SMT3.

It localises to the nucleus. Its function is as follows. ATP-dependent helicase involved mating type switching and in silencing interference through its interaction with the silencing regulator SIR4. Cooperates with UBC4 and UBC5 to mediate ubiquitination of SUMO conjugates. The sequence is that of ATP-dependent helicase ULS1 (ULS1) from Saccharomyces cerevisiae (strain ATCC 204508 / S288c) (Baker's yeast).